The sequence spans 387 residues: Phosphoglycerate kinase (387 aa).

Residues 21–23, R36, 59–62, R113, and R146 each bind substrate; these read DLN and HLGR. Residues K197, E314, and 340-343 contribute to the ATP site; that span reads GGDT.

This sequence belongs to the phosphoglycerate kinase family. In terms of assembly, monomer.

It localises to the cytoplasm. It catalyses the reaction (2R)-3-phosphoglycerate + ATP = (2R)-3-phospho-glyceroyl phosphate + ADP. Its pathway is carbohydrate degradation; glycolysis; pyruvate from D-glyceraldehyde 3-phosphate: step 2/5. The polypeptide is Phosphoglycerate kinase (Enterobacter sp. (strain 638)).